Here is a 98-residue protein sequence, read N- to C-terminus: Integration host factor subunit alpha (98 aa).

The segment at 49 to 70 (FGNFDLRDKNQRPGRNPKTGED) is disordered.

This sequence belongs to the bacterial histone-like protein family. Heterodimer of an alpha and a beta chain.

Functionally, this protein is one of the two subunits of integration host factor, a specific DNA-binding protein that functions in genetic recombination as well as in transcriptional and translational control. The sequence is that of Integration host factor subunit alpha from Serratia proteamaculans (strain 568).